The primary structure comprises 226 residues: ATP synthase F(0) complex subunit a (226 aa).

Helical transmembrane passes span 12 to 32, 68 to 88, 97 to 117, 138 to 158, 164 to 184, and 189 to 209; these read PTMM…ILFP, WALM…LGLL, QLSM…ITGF, IPML…ALAV, ITAG…LMDI, and AFIT…VALI.

It belongs to the ATPase A chain family. As to quaternary structure, component of the ATP synthase complex composed at least of ATP5F1A/subunit alpha, ATP5F1B/subunit beta, ATP5MC1/subunit c (homooctomer), MT-ATP6/subunit a, MT-ATP8/subunit 8, ATP5ME/subunit e, ATP5MF/subunit f, ATP5MG/subunit g, ATP5MK/subunit k, ATP5MJ/subunit j, ATP5F1C/subunit gamma, ATP5F1D/subunit delta, ATP5F1E/subunit epsilon, ATP5PF/subunit F6, ATP5PB/subunit b, ATP5PD/subunit d, ATP5PO/subunit OSCP. ATP synthase complex consists of a soluble F(1) head domain (subunits alpha(3) and beta(3)) - the catalytic core - and a membrane F(0) domain - the membrane proton channel (subunits c, a, 8, e, f, g, k and j). These two domains are linked by a central stalk (subunits gamma, delta, and epsilon) rotating inside the F1 region and a stationary peripheral stalk (subunits F6, b, d, and OSCP). Interacts with DNAJC30; interaction is direct.

It is found in the mitochondrion inner membrane. The catalysed reaction is H(+)(in) = H(+)(out). In terms of biological role, subunit a, of the mitochondrial membrane ATP synthase complex (F(1)F(0) ATP synthase or Complex V) that produces ATP from ADP in the presence of a proton gradient across the membrane which is generated by electron transport complexes of the respiratory chain. ATP synthase complex consist of a soluble F(1) head domain - the catalytic core - and a membrane F(1) domain - the membrane proton channel. These two domains are linked by a central stalk rotating inside the F(1) region and a stationary peripheral stalk. During catalysis, ATP synthesis in the catalytic domain of F(1) is coupled via a rotary mechanism of the central stalk subunits to proton translocation. With the subunit c (ATP5MC1), forms the proton-conducting channel in the F(0) domain, that contains two crucial half-channels (inlet and outlet) that facilitate proton movement from the mitochondrial intermembrane space (IMS) into the matrix. Protons are taken up via the inlet half-channel and released through the outlet half-channel, following a Grotthuss mechanism. In Phoca vitulina (Harbor seal), this protein is ATP synthase F(0) complex subunit a.